A 281-amino-acid chain; its full sequence is 2-dehydro-3-deoxyphosphooctonate aldolase (281 aa).

This sequence belongs to the KdsA family.

It is found in the cytoplasm. It carries out the reaction D-arabinose 5-phosphate + phosphoenolpyruvate + H2O = 3-deoxy-alpha-D-manno-2-octulosonate-8-phosphate + phosphate. It functions in the pathway carbohydrate biosynthesis; 3-deoxy-D-manno-octulosonate biosynthesis; 3-deoxy-D-manno-octulosonate from D-ribulose 5-phosphate: step 2/3. It participates in bacterial outer membrane biogenesis; lipopolysaccharide biosynthesis. In Pseudomonas fluorescens (strain ATCC BAA-477 / NRRL B-23932 / Pf-5), this protein is 2-dehydro-3-deoxyphosphooctonate aldolase.